The following is a 440-amino-acid chain: Protein disulfide-isomerase 5-2 (440 aa).

An N-terminal signal peptide occupies residues 1–23 (MRSLKLLLCWISFLTLSISISAS). Residues 24–139 (SDDQFTLDGT…LVRYLKKFVA (116 aa)) form the Thioredoxin domain. Catalysis depends on nucleophile residues cysteine 61 and cysteine 64. A disulfide bridge connects residues cysteine 61 and cysteine 64. Threonine 160 is subject to Phosphothreonine. N-linked (GlcNAc...) asparagine glycosylation occurs at asparagine 171. A helical membrane pass occupies residues 376 to 396 (SMIGIRSVYILVFLVAVIMML). Residues 406–440 (TGVRTATAVRERVDQATTVPEDESSEHKPSDKKED) are disordered. Residues 430–440 (SEHKPSDKKED) are compositionally biased toward basic and acidic residues.

Belongs to the protein disulfide isomerase family. As to expression, widely expressed.

It localises to the membrane. In terms of biological role, acts as a protein-folding catalyst that interacts with nascent polypeptides to catalyze the formation, isomerization, and reduction or oxidation of disulfide bonds. The sequence is that of Protein disulfide-isomerase 5-2 (PDIL5-2) from Arabidopsis thaliana (Mouse-ear cress).